Consider the following 1186-residue polypeptide: Atrophin-1 (1186 aa).

Disordered stretches follow at residues 1-604 (MKTR…PTVT), 618-763 (ASSP…ARFN), and 781-858 (VPLE…HRPP). The Nuclear localization signal motif lies at 16–32 (RKKEAPGPREELRSRGR). Residues 17–29 (KKEAPGPREELRS) are compositionally biased toward basic and acidic residues. Position 34 is a phosphoserine (Ser34). The segment covering 45–63 (GKAEKSRQTAKKARVEEAS) has biased composition (basic and acidic residues). Phosphoserine occurs at positions 77, 79, 100, 102, and 106. The span at 107 to 127 (LDGRSLNDDGSSDPRDIDQDN) shows a compositional bias: basic and acidic residues. Positions 128 to 151 (RSTSPSIYSPGSVENDSDSSSGLS) are enriched in polar residues. Over residues 157 to 173 (PYHPPPLFPPSPQPPDS) the composition is skewed to pro residues. Composition is skewed to low complexity over residues 258 to 270 (PISV…SGAP), 349 to 365 (PTLA…SSSA), and 375 to 396 (SSSS…SSAS). The segment covering 416–437 (SLSVSNQPPKYTQPSLPSQAVW) has biased composition (polar residues). Residues 484 to 503 (QQQQQQQQQQQQQQQHHGNS) show a composition bias toward low complexity. The involved in binding BAIAP2 stretch occupies residues 513-563 (HPLEGGSSHHAHPYAMSPSLGSLRPYPPGPAHLPPPHSQVSYSQAGPNGPP). Residues 537-549 (PYPPGPAHLPPPH) are compositionally biased toward pro residues. Composition is skewed to low complexity over residues 565–582 (SSSS…YPCS) and 618–628 (ASSPAGYKTAS). Ser628 carries the post-translational modification Phosphoserine. The residue at position 637 (Lys637) is an N6-acetyllysine. Thr649 carries the post-translational modification Phosphothreonine. Phosphoserine is present on Ser657. Thr665 carries the phosphothreonine modification. Pro residues-rich tracts occupy residues 689-714 (GPGP…PASG) and 735-748 (SPVP…PPPK). A Phosphoserine; by MAPK8 modification is found at Ser735. Residues Ser742 and Ser744 each carry the phosphoserine modification. A compositionally biased stretch (basic and acidic residues) spans 791-835 (KRADLVEKVRREAEQRAREEKEREREREREKEREREKERELERSV). Residues 875–890 (DTPALRTLSEYARPHV) form a required for interaction with FAT1 region. Ser892 is subject to Phosphoserine. Residues 1029–1037 (ALGNDPLAR) carry the Nuclear export signal motif. At Arg1111 the chain carries Asymmetric dimethylarginine. Residue Lys1179 forms a Glycyl lysine isopeptide (Lys-Gly) (interchain with G-Cter in SUMO2) linkage.

In terms of assembly, interacts with NR2E1; the interaction represses the transcriptional activity of NR2E1. Interacts with BAIAP2, WWP1, WWP2, WWP3 and RERE. Interacts (via its N-terminus) with MTG8; the interaction enhances transcriptional repression of MTG8. Interacts with FAT1 (via a C-terminal domain). Interacts with PQBP1. Phosphorylated in vitro by MAPK8/JNK1 on Ser-735.

It localises to the nucleus. Its subcellular location is the cytoplasm. The protein resides in the perinuclear region. It is found in the cell junction. Functionally, transcriptional corepressor. Corepressor of MTG8 transcriptional repression. Recruits NR2E1 to repress transcription. Has some intrinsic repression activity. Promotes vascular smooth cell (VSMC) migration and orientation. The sequence is that of Atrophin-1 (ATN1) from Pan troglodytes (Chimpanzee).